A 179-amino-acid polypeptide reads, in one-letter code: uncharacterized protein (179 aa).

Residues Ile139–Glu172 adopt a coiled-coil conformation.

This is an uncharacterized protein from Methanocaldococcus jannaschii (strain ATCC 43067 / DSM 2661 / JAL-1 / JCM 10045 / NBRC 100440) (Methanococcus jannaschii).